Reading from the N-terminus, the 261-residue chain is Cytochrome c oxidase subunit 3 (261 aa).

At 1 to 15 (MTHQTHAYHMVNPSP) the chain is on the mitochondrial matrix side. A helical transmembrane segment spans residues 16–34 (WPLTGALSALLMTSGLIMW). At 35–40 (FHFNSM) the chain is on the mitochondrial intermembrane side. A helical transmembrane segment spans residues 41-66 (YLLMLGLTTNTLTMYQWWRDIVREST). The Mitochondrial matrix segment spans residues 67 to 72 (FQGHHT). The helical transmembrane segment at 73–105 (PIVQKGLRYGMILFIVSEVFFFAGFFWAFYHSS) threads the bilayer. Over 106 to 128 (LAPTPELGGCWPPTGITPLNPME) the chain is Mitochondrial intermembrane. The helical transmembrane segment at 129-152 (VPLLNTSVLLASGVSITWAHHSLM) threads the bilayer. Topologically, residues 153 to 155 (EGN) are mitochondrial matrix. A helical membrane pass occupies residues 156–183 (RKHMLQALFITISLGIYFTLLQASEYYE). At 184–190 (TPFTISD) the chain is on the mitochondrial intermembrane side. A helical transmembrane segment spans residues 191-223 (GIYGSTFFMATGFHGLHVIIGSTFLIVCFVRQL). The Mitochondrial matrix segment spans residues 224-232 (KFHFTSNHH). Residues 233–256 (FGFEAAAWYWHFVDVVWLFLYVSI) form a helical membrane-spanning segment. At 257-261 (YWWGS) the chain is on the mitochondrial intermembrane side.

It belongs to the cytochrome c oxidase subunit 3 family. Component of the cytochrome c oxidase (complex IV, CIV), a multisubunit enzyme composed of 14 subunits. The complex is composed of a catalytic core of 3 subunits MT-CO1, MT-CO2 and MT-CO3, encoded in the mitochondrial DNA, and 11 supernumerary subunits COX4I, COX5A, COX5B, COX6A, COX6B, COX6C, COX7A, COX7B, COX7C, COX8 and NDUFA4, which are encoded in the nuclear genome. The complex exists as a monomer or a dimer and forms supercomplexes (SCs) in the inner mitochondrial membrane with NADH-ubiquinone oxidoreductase (complex I, CI) and ubiquinol-cytochrome c oxidoreductase (cytochrome b-c1 complex, complex III, CIII), resulting in different assemblies (supercomplex SCI(1)III(2)IV(1) and megacomplex MCI(2)III(2)IV(2)).

The protein localises to the mitochondrion inner membrane. The enzyme catalyses 4 Fe(II)-[cytochrome c] + O2 + 8 H(+)(in) = 4 Fe(III)-[cytochrome c] + 2 H2O + 4 H(+)(out). Component of the cytochrome c oxidase, the last enzyme in the mitochondrial electron transport chain which drives oxidative phosphorylation. The respiratory chain contains 3 multisubunit complexes succinate dehydrogenase (complex II, CII), ubiquinol-cytochrome c oxidoreductase (cytochrome b-c1 complex, complex III, CIII) and cytochrome c oxidase (complex IV, CIV), that cooperate to transfer electrons derived from NADH and succinate to molecular oxygen, creating an electrochemical gradient over the inner membrane that drives transmembrane transport and the ATP synthase. Cytochrome c oxidase is the component of the respiratory chain that catalyzes the reduction of oxygen to water. Electrons originating from reduced cytochrome c in the intermembrane space (IMS) are transferred via the dinuclear copper A center (CU(A)) of subunit 2 and heme A of subunit 1 to the active site in subunit 1, a binuclear center (BNC) formed by heme A3 and copper B (CU(B)). The BNC reduces molecular oxygen to 2 water molecules using 4 electrons from cytochrome c in the IMS and 4 protons from the mitochondrial matrix. The sequence is that of Cytochrome c oxidase subunit 3 (MT-CO3) from Phoca vitulina (Harbor seal).